The primary structure comprises 257 residues: UPF0246 protein ASA_3634 (257 aa).

The protein belongs to the UPF0246 family.

The chain is UPF0246 protein ASA_3634 from Aeromonas salmonicida (strain A449).